Consider the following 442-residue polypeptide: 3-phosphoshikimate 1-carboxyvinyltransferase (442 aa).

Residues Lys27, Ser28, and Arg32 each contribute to the 3-phosphoshikimate site. Residue Lys27 coordinates phosphoenolpyruvate. Phosphoenolpyruvate-binding residues include Gly100 and Arg128. 6 residues coordinate 3-phosphoshikimate: Ser174, Ser175, Gln176, Ser204, Asp321, and Lys348. Position 176 (Gln176) interacts with phosphoenolpyruvate. Asp321 serves as the catalytic Proton acceptor. Phosphoenolpyruvate-binding residues include Arg352, Arg394, and Lys424.

The protein belongs to the EPSP synthase family. In terms of assembly, monomer.

It localises to the cytoplasm. The catalysed reaction is 3-phosphoshikimate + phosphoenolpyruvate = 5-O-(1-carboxyvinyl)-3-phosphoshikimate + phosphate. It functions in the pathway metabolic intermediate biosynthesis; chorismate biosynthesis; chorismate from D-erythrose 4-phosphate and phosphoenolpyruvate: step 6/7. Functionally, catalyzes the transfer of the enolpyruvyl moiety of phosphoenolpyruvate (PEP) to the 5-hydroxyl of shikimate-3-phosphate (S3P) to produce enolpyruvyl shikimate-3-phosphate and inorganic phosphate. The polypeptide is 3-phosphoshikimate 1-carboxyvinyltransferase (Herminiimonas arsenicoxydans).